The primary structure comprises 457 residues: Bifunctional protein GlmU (457 aa).

The segment at 1-232 (MAKVAAIVLA…PMEVMGVNDR (232 aa)) is pyrophosphorylase. Residues 9–12 (LAAG), Lys-23, Gln-75, and 80–81 (GT) each bind UDP-N-acetyl-alpha-D-glucosamine. Asp-105 lines the Mg(2+) pocket. 4 residues coordinate UDP-N-acetyl-alpha-D-glucosamine: Gly-142, Glu-157, Asn-172, and Asn-230. Residue Asn-230 participates in Mg(2+) binding. Residues 233-253 (VQLAEAGRIIRVRINKALMVA) form a linker region. Positions 254–457 (GTTIIDPETT…NKEGWKLKNK (204 aa)) are N-acetyltransferase. UDP-N-acetyl-alpha-D-glucosamine is bound by residues Arg-336 and Lys-354. His-366 (proton acceptor) is an active-site residue. UDP-N-acetyl-alpha-D-glucosamine contacts are provided by Tyr-369 and Asn-380. Residues 389–390 (NY), Ser-408, Ala-426, and Arg-443 each bind acetyl-CoA.

This sequence in the N-terminal section; belongs to the N-acetylglucosamine-1-phosphate uridyltransferase family. It in the C-terminal section; belongs to the transferase hexapeptide repeat family. Homotrimer. The cofactor is Mg(2+).

It is found in the cytoplasm. The catalysed reaction is alpha-D-glucosamine 1-phosphate + acetyl-CoA = N-acetyl-alpha-D-glucosamine 1-phosphate + CoA + H(+). The enzyme catalyses N-acetyl-alpha-D-glucosamine 1-phosphate + UTP + H(+) = UDP-N-acetyl-alpha-D-glucosamine + diphosphate. The protein operates within nucleotide-sugar biosynthesis; UDP-N-acetyl-alpha-D-glucosamine biosynthesis; N-acetyl-alpha-D-glucosamine 1-phosphate from alpha-D-glucosamine 6-phosphate (route II): step 2/2. Its pathway is nucleotide-sugar biosynthesis; UDP-N-acetyl-alpha-D-glucosamine biosynthesis; UDP-N-acetyl-alpha-D-glucosamine from N-acetyl-alpha-D-glucosamine 1-phosphate: step 1/1. It participates in bacterial outer membrane biogenesis; LPS lipid A biosynthesis. In terms of biological role, catalyzes the last two sequential reactions in the de novo biosynthetic pathway for UDP-N-acetylglucosamine (UDP-GlcNAc). The C-terminal domain catalyzes the transfer of acetyl group from acetyl coenzyme A to glucosamine-1-phosphate (GlcN-1-P) to produce N-acetylglucosamine-1-phosphate (GlcNAc-1-P), which is converted into UDP-GlcNAc by the transfer of uridine 5-monophosphate (from uridine 5-triphosphate), a reaction catalyzed by the N-terminal domain. The protein is Bifunctional protein GlmU of Geotalea daltonii (strain DSM 22248 / JCM 15807 / FRC-32) (Geobacter daltonii).